The primary structure comprises 571 residues: Proline--tRNA ligase (571 aa).

The protein belongs to the class-II aminoacyl-tRNA synthetase family. ProS type 1 subfamily. In terms of assembly, homodimer.

It localises to the cytoplasm. The catalysed reaction is tRNA(Pro) + L-proline + ATP = L-prolyl-tRNA(Pro) + AMP + diphosphate. Functionally, catalyzes the attachment of proline to tRNA(Pro) in a two-step reaction: proline is first activated by ATP to form Pro-AMP and then transferred to the acceptor end of tRNA(Pro). As ProRS can inadvertently accommodate and process non-cognate amino acids such as alanine and cysteine, to avoid such errors it has two additional distinct editing activities against alanine. One activity is designated as 'pretransfer' editing and involves the tRNA(Pro)-independent hydrolysis of activated Ala-AMP. The other activity is designated 'posttransfer' editing and involves deacylation of mischarged Ala-tRNA(Pro). The misacylated Cys-tRNA(Pro) is not edited by ProRS. The chain is Proline--tRNA ligase from Pediococcus pentosaceus (strain ATCC 25745 / CCUG 21536 / LMG 10740 / 183-1w).